The primary structure comprises 1392 residues: ATP-dependent helicase/nuclease subunit A (1392 aa).

The 592-residue stretch at 4–595 folds into the UvrD-like helicase ATP-binding domain; sequence FKPTPAQSKA…IVLGENFRSM (592 aa). Position 25–32 (25–32) interacts with ATP; the sequence is ASAGSGKT. Residues 623–929 enclose the UvrD-like helicase C-terminal domain; that stretch reads AHLKYAATYY…NVMTIHGSKG (307 aa).

This sequence belongs to the helicase family. AddA subfamily. In terms of assembly, heterodimer of AddA and AddB/RexB. The cofactor is Mg(2+).

It catalyses the reaction Couples ATP hydrolysis with the unwinding of duplex DNA by translocating in the 3'-5' direction.. It carries out the reaction ATP + H2O = ADP + phosphate + H(+). The heterodimer acts as both an ATP-dependent DNA helicase and an ATP-dependent, dual-direction single-stranded exonuclease. Recognizes the chi site generating a DNA molecule suitable for the initiation of homologous recombination. The AddA nuclease domain is required for chi fragment generation; this subunit has the helicase and 3' -&gt; 5' nuclease activities. This chain is ATP-dependent helicase/nuclease subunit A, found in Limosilactobacillus reuteri subsp. reuteri (strain JCM 1112) (Lactobacillus reuteri).